The following is a 298-amino-acid chain: Olfactory receptor 52Z1P (298 aa).

Over 1 to 14 (MGIPGLEGLHTWIS) the chain is Extracellular. The chain crosses the membrane as a helical span at residues 15–35 (IPFSFMYIVAVAGNIFLIFLI). The Cytoplasmic segment spans residues 36 to 43 (MTERSLHE). The helical transmembrane segment at 44–64 (PMYLFLSMLASADFLLATAAA) threads the bilayer. At 65–85 (PKVLAILWFHSMDISFGSCVS) the chain is on the extracellular side. Cys83 and Cys164 form a disulfide bridge. The helical transmembrane segment at 86–106 (QMFFIHFIFVAESAILLAMAF) threads the bilayer. Over 107-128 (DRYVAICYPLRYTILTSSAVRK) the chain is Cytoplasmic. Residues 129–149 (IGIAAVVRSFFICCPFIFLVY) form a helical membrane-spanning segment. The Extracellular portion of the chain corresponds to 150-178 (RLTYCGRNIIPHSYCEHIARLACGNINVN). A helical transmembrane segment spans residues 179–199 (IIYGLTVALLSTGLDIVLIII). The Cytoplasmic portion of the chain corresponds to 200-223 (SYTMILHSVFQISSWAARFKALST). Residues 224 to 244 (CGSHICVIFMFYTPAFFSFLA) traverse the membrane as a helical segment. Residues 245–257 (HRFGGKTIPHHIH) lie on the Extracellular side of the membrane. The helical transmembrane segment at 258-278 (ILVGSLYVLVPPMLNPIIYGV) threads the bilayer. The Cytoplasmic portion of the chain corresponds to 279-298 (KTKQIKDRVILLFSPISVCC).

The protein belongs to the G-protein coupled receptor 1 family.

The protein localises to the cell membrane. Functionally, odorant receptor. The polypeptide is Olfactory receptor 52Z1P (Homo sapiens (Human)).